The following is a 647-amino-acid chain: Macrolide export ATP-binding/permease protein MacB (647 aa).

An ABC transporter domain is found at 7–245 (IRLEDICKTF…EATLQPHEEI (239 aa)). 43–50 (GASGSGKS) provides a ligand contact to ATP. 4 helical membrane-spanning segments follow: residues 274-294 (VLTLLGIIIGVSSVVTMLAIG), 529-549 (VAAISLLVGGIGVMNIMLVSV), 573-593 (FIIEALSVSAIGGAIGVILGL), and 610-630 (FGPVLLAFACAFATGLIFGFL).

This sequence belongs to the ABC transporter superfamily. Macrolide exporter (TC 3.A.1.122) family. As to quaternary structure, homodimer.

The protein resides in the cell inner membrane. Its function is as follows. Non-canonical ABC transporter that contains transmembrane domains (TMD), which form a pore in the inner membrane, and an ATP-binding domain (NBD), which is responsible for energy generation. Confers resistance against macrolides. The protein is Macrolide export ATP-binding/permease protein MacB of Brucella melitensis biotype 1 (strain ATCC 23456 / CCUG 17765 / NCTC 10094 / 16M).